Consider the following 809-residue polypeptide: Lon protease (809 aa).

A Lon N-terminal domain is found at 8 to 203 (LPVVALRNMA…RLCLILADEI (196 aa)). ATP is bound at residue 354-361 (GPPGTGKT). Residues 629-809 (KDEVGIVCGL…MDEVLKHALV (181 aa)) enclose the Lon proteolytic domain. Residues Ser716 and Lys759 contribute to the active site.

Belongs to the peptidase S16 family. In terms of assembly, homohexamer. Organized in a ring with a central cavity.

The protein resides in the cytoplasm. The catalysed reaction is Hydrolysis of proteins in presence of ATP.. In terms of biological role, ATP-dependent serine protease that mediates the selective degradation of mutant and abnormal proteins as well as certain short-lived regulatory proteins. Required for cellular homeostasis and for survival from DNA damage and developmental changes induced by stress. Degrades polypeptides processively to yield small peptide fragments that are 5 to 10 amino acids long. Binds to DNA in a double-stranded, site-specific manner. The sequence is that of Lon protease from Lachnoclostridium phytofermentans (strain ATCC 700394 / DSM 18823 / ISDg) (Clostridium phytofermentans).